The following is a 135-amino-acid chain: uncharacterized protein (135 aa).

Residues 1–75 (MAAATETGQA…PPPRPPQRRC (75 aa)) are disordered.

This is an uncharacterized protein from Homo sapiens (Human).